The sequence spans 471 residues: ATP synthase subunit beta (471 aa).

153 to 160 (GGAGVGKT) serves as a coordination point for ATP.

Belongs to the ATPase alpha/beta chains family. In terms of assembly, F-type ATPases have 2 components, CF(1) - the catalytic core - and CF(0) - the membrane proton channel. CF(1) has five subunits: alpha(3), beta(3), gamma(1), delta(1), epsilon(1). CF(0) has four main subunits: a(1), b(1), b'(1) and c(9-12).

It localises to the cell inner membrane. It carries out the reaction ATP + H2O + 4 H(+)(in) = ADP + phosphate + 5 H(+)(out). Its function is as follows. Produces ATP from ADP in the presence of a proton gradient across the membrane. The catalytic sites are hosted primarily by the beta subunits. This is ATP synthase subunit beta from Methylibium petroleiphilum (strain ATCC BAA-1232 / LMG 22953 / PM1).